The following is a 518-amino-acid chain: MFSNFYVQQRIKKMELMRQEGFNPYANKTTRTISNYNFLNKYNHLKMQSSDDTQDCTQNKEIESIVGRVRFIRLMGKACFIKIQDESGILQAYVSKNDIGEDFLLIKKVLEVGDIINVSGYAFVTKTGELSIHTLTLQILTKSIVPLPEKFHGLNDIELRYRQRYVDLIVNNKVKETFKLRSQIVSCIRQFFEQKGFLEVETPMLHSIPGGANARPFITHHNALDVDRYLRIAPELYLKRLIVGGFEAIFELNRNFRNEGMDHSHNPEFSMIEFYWAYKTYEDLITLTQELFAFLFKKLNLPHSLIHDELEIDFSQWHIIGYKEALIKIGGLDKNIIDNQDALLSFLMSKHLKVDKSMSYGKLLGEAFDEFVEHKLINPTFITQYPIEISPLARRNDENPNVADRFELFIGGKEIANGFSELNDPIDQFERFKEQAKAKDAGDEEAQYMDEDYVWALAHGMPPTAGEGIGIDRLVMLLSNAKTIKDVILFPALKPTKSNFDIILSQDALSNAQIIKEN.

Mg(2+) contacts are provided by Glu-407 and Glu-414.

The protein belongs to the class-II aminoacyl-tRNA synthetase family. Homodimer. The cofactor is Mg(2+).

The protein resides in the cytoplasm. It catalyses the reaction tRNA(Lys) + L-lysine + ATP = L-lysyl-tRNA(Lys) + AMP + diphosphate. This chain is Lysine--tRNA ligase, found in Helicobacter hepaticus (strain ATCC 51449 / 3B1).